The chain runs to 245 residues: Small ribosomal subunit protein uS3 (245 aa).

The KH type-2 domain occupies 39 to 111 (IRNFINKNYS…EVFFNVIEIK (73 aa)).

This sequence belongs to the universal ribosomal protein uS3 family. Part of the 30S ribosomal subunit. Forms a tight complex with proteins S10 and S14.

In terms of biological role, binds the lower part of the 30S subunit head. Binds mRNA in the 70S ribosome, positioning it for translation. In Phytoplasma mali (strain AT), this protein is Small ribosomal subunit protein uS3.